The sequence spans 477 residues: Delayed-rectifier potassium channel regulatory subunit KCNS2 (477 aa).

The Cytoplasmic portion of the chain corresponds to 1-184 (MTRQSLWDVS…LALDNPGYSV (184 aa)). The helical transmembrane segment at 185-206 (LSRVFSVLSILVVLGSIITMCL) threads the bilayer. Residues 207–225 (NSLPDFQIPDSQGNPGEDP) lie on the Extracellular side of the membrane. A helical transmembrane segment spans residues 226–248 (RFEIVEHFGIAWFTFELVARFAV). The Cytoplasmic segment spans residues 249–259 (APDFLKFFKNA). A helical transmembrane segment spans residues 260–280 (LNLIDLMSIVPFYITLVVNLV). At 281-290 (VESSPTLANL) the chain is on the extracellular side. Residues 291-311 (GRVAQVLRLMRIFRILKLARH) form a helical; Voltage-sensor membrane-spanning segment. Residues 312-326 (STGLRSLGATLKYSY) lie on the Cytoplasmic side of the membrane. The chain crosses the membrane as a helical span at residues 327–348 (KEVGLLLLYLSVGISIFSVVAY). The Extracellular segment spans residues 349–361 (TIEKEENEGLATI). An intramembrane region (helical) is located at residues 362-373 (PACWWWATVSMT). A Selectivity filter motif is present at residues 374 to 379 (TVGYGD). Residues 374–381 (TVGYGDVV) lie within the membrane without spanning it. Topologically, residues 382–388 (PGTTAGK) are extracellular. A helical membrane pass occupies residues 389-417 (LTASACILAGILVVVLPITLIFNKFSHFY). Residues 418–477 (RRQKQLESAMRSCDFGDGMKEVPSVNLRDYYAHKVKSLMASLTNMSRSSPSELSLDDSLH) lie on the Cytoplasmic side of the membrane.

The protein belongs to the potassium channel family. S (TC 1.A.1.2) subfamily. Kv9.2/KCNS2 sub-subfamily. In terms of assembly, heterotetramer with KCNB1 and KCNB2. Does not form homomultimers. In terms of tissue distribution, detected in brain, but not in the other tissues tested. Expression was highest in the olfactory bulb, cerebral cortex, hippocampus, habenula, basolateral amygdaloid nuclei and cerebellum.

The protein localises to the cell membrane. Functionally, potassium channel regulatory subunit that modulate the delayed rectifier voltage-gated potassium channel activity of KCNB1 and KCNB2 by altering their kinetics, expression levels, and shifting the half-inactivation potential to more polarized values. While it does not form functional channels on its own, it can form functional heterotetrameric channels with KCNB1 and KCNB2. Each regulatory subunit has unique regulatory properties that can lead to extensive inhibition, significant changes in kinetics, and/or substantial shifts in the voltage dependencies of the inactivation process. This is Delayed-rectifier potassium channel regulatory subunit KCNS2 from Mus musculus (Mouse).